A 255-amino-acid polypeptide reads, in one-letter code: Triosephosphate isomerase (255 aa).

9-11 (NWK) contacts substrate. H96 acts as the Electrophile in catalysis. E168 (proton acceptor) is an active-site residue. Substrate contacts are provided by G174 and S213.

Belongs to the triosephosphate isomerase family. Homodimer.

It localises to the cytoplasm. The catalysed reaction is D-glyceraldehyde 3-phosphate = dihydroxyacetone phosphate. Its pathway is carbohydrate biosynthesis; gluconeogenesis. It functions in the pathway carbohydrate degradation; glycolysis; D-glyceraldehyde 3-phosphate from glycerone phosphate: step 1/1. Functionally, involved in the gluconeogenesis. Catalyzes stereospecifically the conversion of dihydroxyacetone phosphate (DHAP) to D-glyceraldehyde-3-phosphate (G3P). This chain is Triosephosphate isomerase, found in Buchnera aphidicola subsp. Acyrthosiphon pisum (strain APS) (Acyrthosiphon pisum symbiotic bacterium).